A 315-amino-acid chain; its full sequence is MSFSNEMKVFSGNANRPLAEKIANYLNLQLGDCEVGRFADGEINVRINETVRGHDIFLIQPTSPPVNENLMELLIMIDAFKRASANTIAVVIPYYGYARQDRKAKGRDPISAKLVANLITVAGATRVLTVDLHAEQIQGFFDIPVDNLWSYPVFAEELLKRENIVPEETVVVSPDVGGVRRARRMAERLGTSLAILDKRRPSDNVAEVVNIIGEVEDKVVIMFDDIIDTAHSIVKGAEALKNAGAKRIIACATHGVFSDRALERIENSSIDTVYITDTIYHENLPEKVKVISVANLIGEAIMRIRKHLSVSTLFR.

ATP contacts are provided by residues 40–42 and 99–100; these read DGE and RQ. Residues His-133 and Asp-175 each contribute to the Mg(2+) site. Lys-198 is a catalytic residue. D-ribose 5-phosphate contacts are provided by residues Arg-200, Asp-224, and 228–232; that span reads DTAHS.

The protein belongs to the ribose-phosphate pyrophosphokinase family. Class I subfamily. In terms of assembly, homohexamer. The cofactor is Mg(2+).

It is found in the cytoplasm. It catalyses the reaction D-ribose 5-phosphate + ATP = 5-phospho-alpha-D-ribose 1-diphosphate + AMP + H(+). Its pathway is metabolic intermediate biosynthesis; 5-phospho-alpha-D-ribose 1-diphosphate biosynthesis; 5-phospho-alpha-D-ribose 1-diphosphate from D-ribose 5-phosphate (route I): step 1/1. In terms of biological role, involved in the biosynthesis of the central metabolite phospho-alpha-D-ribosyl-1-pyrophosphate (PRPP) via the transfer of pyrophosphoryl group from ATP to 1-hydroxyl of ribose-5-phosphate (Rib-5-P). In Thermotoga maritima (strain ATCC 43589 / DSM 3109 / JCM 10099 / NBRC 100826 / MSB8), this protein is Ribose-phosphate pyrophosphokinase.